Reading from the N-terminus, the 714-residue chain is Testis-expressed protein 13D (714 aa).

Disordered regions lie at residues 300-419 (GSFP…GCSD) and 431-675 (RRCK…PASF). Basic and acidic residues-rich tracts occupy residues 307–320 (SRSHSQGEGSERSQ) and 366–378 (GNRERQNQKEGPK). The segment covering 379 to 392 (RARRMHTLVFRRSH) has biased composition (basic residues). Residues 403–416 (TVPQGDSRSYSQEG) show a composition bias toward polar residues. Composition is skewed to basic and acidic residues over residues 495–505 (CKPEEGPERPQ), 557–567 (CKPEEGPERPQ), and 636–646 (SRSHGVRESPK). A RanBP2-type zinc finger spans residues 677–706 (VPVNWKCPWCKAINFSWRTACYKCKKACVP).

This sequence belongs to the TEX13 family.

This is Testis-expressed protein 13D from Homo sapiens (Human).